Reading from the N-terminus, the 464-residue chain is E3 ubiquitin-protein ligase TRAIP (464 aa).

The RING-type; atypical zinc-finger motif lies at 7–50 (CTICSDFFDNARDVAAITCGHTFHQECLLQWFHSAPHRTCPQCR). Coiled coils occupy residues 142–186 (LDKQ…MIRD) and 236–277 (AQKA…LQKT). A disordered region spans residues 439-464 (KRKKVSRPTACTSSLANQPRLEDFLK). Positions 456 to 464 (QPRLEDFLK) match the PIP-box motif.

This sequence belongs to the TRAIP family.

The protein localises to the nucleus. It is found in the nucleoplasm. The protein resides in the nucleolus. Its subcellular location is the chromosome. It localises to the cytoplasm. It catalyses the reaction S-ubiquitinyl-[E2 ubiquitin-conjugating enzyme]-L-cysteine + [acceptor protein]-L-lysine = [E2 ubiquitin-conjugating enzyme]-L-cysteine + N(6)-ubiquitinyl-[acceptor protein]-L-lysine.. The protein operates within protein modification; protein ubiquitination. In terms of biological role, E3 ubiquitin ligase required to protect genome stability in response to replication stress. Acts as a key regulator of interstrand cross-link repair, which takes place when both strands of duplex DNA are covalently tethered together, thereby blocking replication and transcription. Controls the choice between the two pathways of replication-coupled interstrand-cross-link repair by mediating ubiquitination of mcm7 subunit of the CMG helicase complex. Short ubiquitin chains on mcm7 promote recruitment of DNA glycosylase neil3. If the interstrand cross-link cannot be cleaved by neil3, the ubiquitin chains continue to grow on mcm7, promoting the unloading of the CMG helicase complex by the vcp/p97 ATPase, enabling the Fanconi anemia DNA repair pathway. Only catalyzes ubiquitination of mcm7 when forks converge. Also involved in the repair of covalent DNA-protein cross-links (DPCs) during DNA synthesis: promotes ubiquitination of DPCs, leading to their degradation by the proteasome. Also acts as a negative regulator of innate immune signaling by inhibiting activation of NF-kappa-B mediated by TNF. The protein is E3 ubiquitin-protein ligase TRAIP of Xenopus laevis (African clawed frog).